Reading from the N-terminus, the 292-residue chain is Small ribosomal subunit protein uS9m (292 aa).

A disordered region spans residues Val273–Arg292.

It belongs to the universal ribosomal protein uS9 family.

It localises to the mitochondrion. This chain is Small ribosomal subunit protein uS9m (MRPS9), found in Kluyveromyces marxianus (Yeast).